A 453-amino-acid polypeptide reads, in one-letter code: UDP-N-acetylmuramate--L-alanine ligase (453 aa).

Glycine 112 to threonine 118 provides a ligand contact to ATP.

This sequence belongs to the MurCDEF family.

The protein localises to the cytoplasm. It carries out the reaction UDP-N-acetyl-alpha-D-muramate + L-alanine + ATP = UDP-N-acetyl-alpha-D-muramoyl-L-alanine + ADP + phosphate + H(+). Its pathway is cell wall biogenesis; peptidoglycan biosynthesis. In terms of biological role, cell wall formation. The polypeptide is UDP-N-acetylmuramate--L-alanine ligase (Lawsonia intracellularis (strain PHE/MN1-00)).